The chain runs to 401 residues: Nodulation protein E (401 aa).

One can recognise a Ketosynthase family 3 (KS3) domain in the interval 2 to 400 (DRRVVITGIG…GTNAVLAFRQ (399 aa)). Catalysis depends on for beta-ketoacyl synthase activity residues Cys-162, His-294, and His-331. The helical transmembrane segment at 329–348 (HAHCLGAASALEMIACVMAI) threads the bilayer.

It belongs to the thiolase-like superfamily. Beta-ketoacyl-ACP synthases family.

It is found in the cell inner membrane. Its function is as follows. Proposed to synthesize NOD factor fatty acyl chain. Involved in the synthesis of a highly unsaturated fatty acid moiety, which forms part of a lipo-oligosaccharide that is responsible for host specificity. This is Nodulation protein E (nodE) from Rhizobium leguminosarum bv. trifolii.